We begin with the raw amino-acid sequence, 483 residues long: Glutamyl-tRNA(Gln) amidotransferase subunit A (483 aa).

Catalysis depends on charge relay system residues Lys76 and Ser151. The active-site Acyl-ester intermediate is the Ser175.

This sequence belongs to the amidase family. GatA subfamily. As to quaternary structure, heterotrimer of A, B and C subunits.

The enzyme catalyses L-glutamyl-tRNA(Gln) + L-glutamine + ATP + H2O = L-glutaminyl-tRNA(Gln) + L-glutamate + ADP + phosphate + H(+). Its function is as follows. Allows the formation of correctly charged Gln-tRNA(Gln) through the transamidation of misacylated Glu-tRNA(Gln) in organisms which lack glutaminyl-tRNA synthetase. The reaction takes place in the presence of glutamine and ATP through an activated gamma-phospho-Glu-tRNA(Gln). This is Glutamyl-tRNA(Gln) amidotransferase subunit A from Pseudomonas entomophila (strain L48).